Consider the following 299-residue polypeptide: Sulfate adenylyltransferase subunit 2 (299 aa).

The protein belongs to the PAPS reductase family. CysD subfamily. As to quaternary structure, sulfate-activating enzymes, NodP and NodQ, may be physically associated.

The enzyme catalyses sulfate + ATP + H(+) = adenosine 5'-phosphosulfate + diphosphate. Functionally, proposed to provide activated sulfate for transfer to nod factor. This Rhizobium meliloti (strain 1021) (Ensifer meliloti) protein is Sulfate adenylyltransferase subunit 2 (nodP).